Consider the following 355-residue polypeptide: tRNA-specific 2-thiouridylase MnmA (355 aa).

ATP is bound by residues Gly-7 to Ser-14 and Leu-33. The active-site Nucleophile is Cys-94. A disulfide bond links Cys-94 and Cys-193. Gly-119 is a binding site for ATP. The tract at residues Lys-143–Gln-145 is interaction with tRNA. Cys-193 (cysteine persulfide intermediate) is an active-site residue. Positions Arg-298–Tyr-299 are interaction with tRNA.

This sequence belongs to the MnmA/TRMU family.

The protein localises to the cytoplasm. It catalyses the reaction S-sulfanyl-L-cysteinyl-[protein] + uridine(34) in tRNA + AH2 + ATP = 2-thiouridine(34) in tRNA + L-cysteinyl-[protein] + A + AMP + diphosphate + H(+). In terms of biological role, catalyzes the 2-thiolation of uridine at the wobble position (U34) of tRNA, leading to the formation of s(2)U34. This chain is tRNA-specific 2-thiouridylase MnmA, found in Acaryochloris marina (strain MBIC 11017).